Reading from the N-terminus, the 148-residue chain is Probable DNA-directed RNA polymerases I, II, and III subunit RPABC3 (148 aa).

A non-specific ssDNA binding region spans residues 16-40 (DPDGKKFDRVSRYFCDAESFKMELI).

It belongs to the eukaryotic RPB8 RNA polymerase subunit family. As to quaternary structure, component of the RNA polymerase I (Pol I), RNA polymerase II (Pol II) and RNA polymerase III (Pol III) complexes consisting of at least 13, 12 and 17 subunits, respectively. Directly interacts with POLR2A.

The protein resides in the nucleus. Its function is as follows. DNA-dependent RNA polymerase catalyzes the transcription of DNA into RNA using the four ribonucleoside triphosphates as substrates. Common component of RNA polymerases I, II and III which synthesize ribosomal RNA precursors, mRNA precursors and many functional non-coding RNAs, and small RNAs, such as 5S rRNA and tRNAs, respectively. This chain is Probable DNA-directed RNA polymerases I, II, and III subunit RPABC3, found in Caenorhabditis briggsae.